The primary structure comprises 95 residues: Small ribosomal subunit protein uS17 (95 aa).

The protein belongs to the universal ribosomal protein uS17 family. As to quaternary structure, part of the 30S ribosomal subunit.

In terms of biological role, one of the primary rRNA binding proteins, it binds specifically to the 5'-end of 16S ribosomal RNA. This is Small ribosomal subunit protein uS17 from Streptomyces coelicolor (strain ATCC BAA-471 / A3(2) / M145).